The following is a 161-amino-acid chain: Probable chemoreceptor glutamine deamidase CheD (161 aa).

This sequence belongs to the CheD family.

It carries out the reaction L-glutaminyl-[protein] + H2O = L-glutamyl-[protein] + NH4(+). Functionally, probably deamidates glutamine residues to glutamate on methyl-accepting chemotaxis receptors (MCPs), playing an important role in chemotaxis. The chain is Probable chemoreceptor glutamine deamidase CheD from Syntrophomonas wolfei subsp. wolfei (strain DSM 2245B / Goettingen).